The sequence spans 86 residues: Small ribosomal subunit protein uS17 (86 aa).

Belongs to the universal ribosomal protein uS17 family. Part of the 30S ribosomal subunit.

Its function is as follows. One of the primary rRNA binding proteins, it binds specifically to the 5'-end of 16S ribosomal RNA. In Lactococcus lactis subsp. cremoris (strain SK11), this protein is Small ribosomal subunit protein uS17.